We begin with the raw amino-acid sequence, 427 residues long: Caspase recruitment domain-containing protein 8 (427 aa).

Residues 1–23 (MGIPTSSVSEEQESSEGQDSGDI) are disordered. Positions 51–186 (FLGPEGNVDV…FYAVLEKPSF (136 aa)) are ZU5. The FIIND domain maps to 51–336 (FLGPEGNVDV…IQLGAASAPP (286 aa)). Positions 187-336 (SLMGILLRIA…IQLGAASAPP (150 aa)) are UPA. Residues 336–426 (PAFSGAAFVK…YLVSYLRQQS (91 aa)) form the CARD domain.

In terms of assembly, interacts with DPP9; leading to inhibit activation of the inflammasome. DPP9 acts via formation of a ternary complex, composed of a DPP9 homodimer, one full-length CARD8 protein, and one cleaved C-terminus of CARD8 (Caspase recruitment domain-containing protein 8, C-terminus). Interacts with DPP8; leading to inhibit activation of the inflammasome, probably via formation of a ternary complex with DPP8. Interacts with NLRP3. Interacts with IKBKG/NEMO. Interacts with DRAL. Binds to caspase-1 (CASP1), CARD16/pseudo-ICE and CARD18/ICEBERG. Interacts with NLRP2 (via NACHT domain). Interacts with the C-terminal part of CARD8 (Caspase recruitment domain-containing protein 8, C-terminus) in absence of pathogens and other damage-associated signals. As to quaternary structure, interacts with the N-terminal part of CARD8 (Caspase recruitment domain-containing protein 8, N-terminus) in absence of pathogens and other damage-associated signals. Homomultimer; forms the CARD8 inflammasome polymeric complex, a filament composed of homopolymers of this form in response to pathogens and other damage-associated signals. The CARD8 inflammasome polymeric complex directly recruits pro-caspase-1 (proCASP1) independently of PYCARD/ASC. Interacts (via CARD domain) with CASP1 (via CARD domain); leading to CASP1 activation. Undergoes autocatalytic processing within the FIIND domain to generate the N-terminal and C-terminal parts, which are associated non-covalently in absence of pathogens and other damage-associated signals. Post-translationally, ubiquitinated by the N-end rule pathway in response to pathogens and other damage-associated signals, leading to its degradation by the proteasome and subsequent release of the cleaved C-terminal part of the protein (Caspase recruitment domain-containing protein 8, C-terminus), which polymerizes and forms the CARD8 inflammasome.

It localises to the cytoplasm. It is found in the nucleus. The protein resides in the inflammasome. Its activity is regulated as follows. CARD8 inflammasome is inhibited by DPP8 and DPP9, which sequester the C-terminal fragment of CARD8 (Caspase recruitment domain-containing protein 8, C-terminus) in a ternary complex, thereby preventing CARD8 oligomerization and activation. CARD8 inflammasome is activated by Val-boroPro (Talabostat, PT-100), an inhibitor of dipeptidyl peptidases DPP8 and DPP9. Val-boroPro relieves inhibition of DPP8 and/or DPP9 by inducing the proteasome-mediated destruction of the N-terminal part of CARD8, releasing its C-terminal part from autoinhibition. In terms of biological role, inflammasome sensor, which mediates inflammasome activation in response to various pathogen-associated signals, leading to subsequent pyroptosis of CD4(+) T-cells and macrophages. Inflammasomes are supramolecular complexes that assemble in the cytosol in response to pathogens and other damage-associated signals and play critical roles in innate immunity and inflammation. Acts as a recognition receptor (PRR): recognizes specific pathogens and other damage-associated signals, such as Val-boroPro inhibitor, and mediates CARD8 inflammasome activation. In response to pathogen-associated signals, the N-terminal part of CARD8 is degraded by the proteasome, releasing the cleaved C-terminal part of the protein (Caspase recruitment domain-containing protein 8, C-terminus), which polymerizes to initiate the formation of the inflammasome complex: the CARD8 inflammasome directly recruits pro-caspase-1 (proCASP1) independently of PYCARD/ASC and promotes caspase-1 (CASP1) activation, which subsequently cleaves and activates inflammatory cytokines IL1B and IL18 and gasdermin-D (GSDMD), leading to pyroptosis. Also acts as a negative regulator of the NLRP3 inflammasome. May also act as an inhibitor of NF-kappa-B activation. Constitutes the precursor of the CARD8 inflammasome, which mediates autoproteolytic processing within the FIIND domain to generate the N-terminal and C-terminal parts, which are associated non-covalently in absence of pathogens and other damage-associated signals. Functionally, regulatory part that prevents formation of the CARD8 inflammasome: in absence of pathogens and other damage-associated signals, interacts with the C-terminal part of CARD8 (Caspase recruitment domain-containing protein 8, C-terminus), preventing activation of the CARD8 inflammasome. In response to pathogen-associated signals, this part is ubiquitinated by the N-end rule pathway and degraded by the proteasome, releasing the cleaved C-terminal part of the protein, which polymerizes and forms the CARD8 inflammasome. Its function is as follows. Constitutes the active part of the CARD8 inflammasome. In absence of pathogens and other damage-associated signals, interacts with the N-terminal part of CARD8 (Caspase recruitment domain-containing protein 8, N-terminus), preventing activation of the CARD8 inflammasome. In response to pathogen-associated signals, the N-terminal part of CARD8 is degraded by the proteasome, releasing this form, which polymerizes to form the CARD8 inflammasome complex: the CARD8 inflammasome complex then directly recruits pro-caspase-1 (proCASP1) and promotes caspase-1 (CASP1) activation, leading to gasdermin-D (GSDMD) cleavage and subsequent pyroptosis. The chain is Caspase recruitment domain-containing protein 8 from Pongo abelii (Sumatran orangutan).